The following is a 129-amino-acid chain: Histone H2A.J (129 aa).

Residues 1-22 (MSGRGKQGGKVRAKAKSRSSRA) form a disordered region. 2 positions are modified to N6-acetyllysine: Lys6 and Lys10. Basic residues predominate over residues 7–19 (QGGKVRAKAKSRS). N6-lactoyllysine; alternate is present on Lys10. Gln105 is modified (N5-methylglutamine). Thr121 bears the Phosphothreonine; by DCAF1 mark.

Belongs to the histone H2A family. As to quaternary structure, the nucleosome is a histone octamer containing two molecules each of H2A, H2B, H3 and H4 assembled in one H3-H4 heterotetramer and two H2A-H2B heterodimers. The octamer wraps approximately 147 bp of DNA. Post-translationally, glutamine methylation at Gln-105 (H2AQ104me) by FBL is specifically dedicated to polymerase I. It is present at 35S ribosomal DNA locus and impairs binding of the FACT complex. In terms of processing, monoubiquitination of Lys-120 (H2AXK119ub) gives a specific tag for epigenetic transcriptional repression. Following DNA double-strand breaks (DSBs), it is ubiquitinated through 'Lys-63' linkage of ubiquitin moieties. Phosphorylation on Ser-2 (H2AS1ph) is enhanced during mitosis. Phosphorylation on Ser-2 by RPS6KA5/MSK1 directly represses transcription. Acetylation of H3 inhibits Ser-2 phosphorylation by RPS6KA5/MSK1. Phosphorylation at Thr-121 (H2AT120ph) by DCAF1 is present in the regulatory region of many tumor suppresor genes and down-regulates their transcription.

It localises to the nucleus. Its subcellular location is the chromosome. Core component of nucleosome. Nucleosomes wrap and compact DNA into chromatin, limiting DNA accessibility to the cellular machineries which require DNA as a template. Histones thereby play a central role in transcription regulation, DNA repair, DNA replication and chromosomal stability. DNA accessibility is regulated via a complex set of post-translational modifications of histones, also called histone code, and nucleosome remodeling. In Bos taurus (Bovine), this protein is Histone H2A.J.